The primary structure comprises 342 residues: Nucleoid-associated protein Sfri_2491 (342 aa).

It belongs to the YejK family.

Its subcellular location is the cytoplasm. The protein resides in the nucleoid. The polypeptide is Nucleoid-associated protein Sfri_2491 (Shewanella frigidimarina (strain NCIMB 400)).